The sequence spans 64 residues: Prokaryotic ubiquitin-like protein Pup (64 aa).

A compositionally biased stretch (polar residues) spans 1–10 (MNQNGSQIHS). The interval 1–32 (MNQNGSQIHSDGNGHSDDTDTPGVSAGQVSVN) is disordered. Positions 20-58 (DTPGVSAGQVSVNTAGVDDLLDEIDGLLESNAEEFVRSY) are ARC ATPase binding. Gln64 is subject to Deamidated glutamine. Gln64 is covalently cross-linked (Isoglutamyl lysine isopeptide (Gln-Lys) (interchain with K-? in acceptor proteins)).

Belongs to the prokaryotic ubiquitin-like protein family. In terms of assembly, strongly interacts with the proteasome-associated ATPase ARC through a hydrophobic interface; the interacting region of Pup lies in its C-terminal half. There is one Pup binding site per ARC hexamer ring. Post-translationally, is modified by deamidation of its C-terminal glutamine to glutamate by the deamidase Dop, a prerequisite to the subsequent pupylation process.

It functions in the pathway protein degradation; proteasomal Pup-dependent pathway. In terms of biological role, protein modifier that is covalently attached to lysine residues of substrate proteins, thereby targeting them for proteasomal degradation. The tagging system is termed pupylation. This is Prokaryotic ubiquitin-like protein Pup from Corynebacterium diphtheriae (strain ATCC 700971 / NCTC 13129 / Biotype gravis).